We begin with the raw amino-acid sequence, 165 residues long: uncharacterized protein (165 aa).

The region spanning 28–139 (QNALKDTGLA…KPNEREEAVK (112 aa)) is the Cupin type-1 domain.

This is an uncharacterized protein from Bacillus subtilis (strain 168).